The primary structure comprises 798 residues: Elongation factor G, mitochondrial (798 aa).

Residues Met1–Tyr24 constitute a mitochondrion transit peptide. Residues Ser97–Gly383 form the tr-type G domain. GTP-binding positions include Ala106 to Thr113, Asp181 to His185, and Asn235 to Asp238.

This sequence belongs to the TRAFAC class translation factor GTPase superfamily. Classic translation factor GTPase family. EF-G/EF-2 subfamily.

The protein localises to the mitochondrion. The protein operates within protein biosynthesis; polypeptide chain elongation. Functionally, mitochondrial GTPase that catalyzes the GTP-dependent ribosomal translocation step during translation elongation. During this step, the ribosome changes from the pre-translocational (PRE) to the post-translocational (POST) state as the newly formed A-site-bound peptidyl-tRNA and P-site-bound deacylated tRNA move to the P and E sites, respectively. Catalyzes the coordinated movement of the two tRNA molecules, the mRNA and conformational changes in the ribosome. This Chaetomium globosum (strain ATCC 6205 / CBS 148.51 / DSM 1962 / NBRC 6347 / NRRL 1970) (Soil fungus) protein is Elongation factor G, mitochondrial.